Consider the following 397-residue polypeptide: Tubby-like protein 8 (397 aa).

The segment covering 1–16 (MAGSRKVNDLLEENKG) has biased composition (basic and acidic residues). Positions 1–46 (MAGSRKVNDLLEENKGNVDTITGSLSTQKGEDKENVSPEKVSTSVE) are disordered. Positions 17–28 (NVDTITGSLSTQ) are enriched in polar residues.

The protein belongs to the TUB family. As to expression, mostly expressed in roots, flowers and siliques.

This chain is Tubby-like protein 8, found in Arabidopsis thaliana (Mouse-ear cress).